Reading from the N-terminus, the 382-residue chain is MAKKDYYEVLGLKKGASENDIKRAYKRLASKHHPDKNQGSKEAEEKFKEINEAYEVLGDDQKRAAYDQYGHAAFEQGGGAGGFGGGFGGADFGDMFGDIFGDIFGGGGRGRQRVVRGEDLRYDLEITLEEAVKGTTKDIQINTLAHCDSCGGSGAEKGSKVETCPHCHGSGRIRRQQGFFVSESICPSCHGSGKKIEKPCRSCHGEGRVHKKENLSVKIPAGVDTGNQLRLAGKGAVGENGAPAGDLYVVIHVREHHIFERDGSNLYCEVPISFAIAALGGEIEVPTLDGRVKLKIPAETQTGKLFRMRGKGVASTRSGYAGDLICRIVVETPVNLTSEQKELLHKLEESLQGKDLSKHAPKSSGFLDGVKKFFDNLGKSDK.

The J domain maps to 5-70; that stretch reads DYYEVLGLKK…QKRAAYDQYG (66 aa). A CR-type zinc finger spans residues 134–212; that stretch reads GTTKDIQINT…CHGEGRVHKK (79 aa). Residues C147, C150, C164, C167, C186, C189, C200, and C203 each contribute to the Zn(2+) site. 4 CXXCXGXG motif repeats span residues 147 to 154, 164 to 171, 186 to 193, and 200 to 207; these read CDSCGGSG, CPHCHGSG, CPSCHGSG, and CRSCHGEG.

Belongs to the DnaJ family. As to quaternary structure, homodimer. The cofactor is Zn(2+).

It is found in the cytoplasm. Participates actively in the response to hyperosmotic and heat shock by preventing the aggregation of stress-denatured proteins and by disaggregating proteins, also in an autonomous, DnaK-independent fashion. Unfolded proteins bind initially to DnaJ; upon interaction with the DnaJ-bound protein, DnaK hydrolyzes its bound ATP, resulting in the formation of a stable complex. GrpE releases ADP from DnaK; ATP binding to DnaK triggers the release of the substrate protein, thus completing the reaction cycle. Several rounds of ATP-dependent interactions between DnaJ, DnaK and GrpE are required for fully efficient folding. Also involved, together with DnaK and GrpE, in the DNA replication of plasmids through activation of initiation proteins. The chain is Chaperone protein DnaJ from Haemophilus influenzae (strain PittGG).